Consider the following 354-residue polypeptide: Ephrin-4 (354 aa).

The first 22 residues, 1-22 (MKRPLDFLLAICLILLRSSTFA), serve as a signal peptide directing secretion. One can recognise an Ephrin RBD domain in the interval 23–173 (DEHTVHWNST…SKNMRLSMKV (151 aa)). N30 carries an N-linked (GlcNAc...) asparagine glycan. 2 disulfides stabilise this stretch: C55–C92 and C80–C162. Positions 173–196 (VLSSQPTPSPSSKPARSRTDARRQ) are disordered. Residues 175 to 186 (SSQPTPSPSSKP) show a composition bias toward low complexity. S335 is lipidated: GPI-anchor amidated serine. Residues 336 to 354 (SSSLPTFLIVFLIAVNLLF) constitute a propeptide, removed in mature form.

The protein belongs to the ephrin family. In terms of processing, may undergo proteolysis by metalloprotease sup-17 to give rise to a soluble form.

The protein localises to the cell membrane. In terms of biological role, regulates the formation or stabilization of cell-cell contacts at several stages of epithelial morphogenesis. In early embryonic development, involved in ventral closure of the epidermis. During male tail morphogenesis, regulates precursor cell sorting together with mab-20 and allows the formation of distinct sensory rays. Probably acts as a ligand for lad-2 to regulate axon guidance of several neurons including SDQL, SDQR, SMD and PLN neurons during neurogenesis. This chain is Ephrin-4 (efn-4), found in Caenorhabditis briggsae.